The chain runs to 659 residues: Putative cysteine-rich receptor-like protein kinase 39 (659 aa).

An N-terminal signal peptide occupies residues 1–27 (MGKYSVLMIFIASSLLIVLQNVEIVNA). Gnk2-homologous domains are found at residues 28–134 (VGCT…NHST) and 142–253 (PSVR…LYAF). The Extracellular segment spans residues 28 to 289 (VGCTGSFFNG…KKKGRSIGYG (262 aa)). N-linked (GlcNAc...) asparagine glycosylation is found at asparagine 38, asparagine 64, asparagine 122, asparagine 131, asparagine 157, asparagine 170, asparagine 259, and asparagine 274. Residues 290–310 (GIIAIVVVLTFINILVFIGYI) form a helical membrane-spanning segment. The Cytoplasmic segment spans residues 311–659 (KVYGRRKESY…DDVFTELSCR (349 aa)). Residues 353–619 (FSSENTLGQG…PTMSSVIIWL (267 aa)) enclose the Protein kinase domain. ATP is bound by residues 359–367 (LGQGGFGTV) and lysine 381. Tyrosine 426 is modified (phosphotyrosine). Aspartate 478 (proton acceptor) is an active-site residue. At serine 482 the chain carries Phosphoserine. Threonine 518 is subject to Phosphothreonine. Tyrosine 526 carries the post-translational modification Phosphotyrosine.

Belongs to the protein kinase superfamily. Ser/Thr protein kinase family. CRK subfamily.

It is found in the membrane. The catalysed reaction is L-seryl-[protein] + ATP = O-phospho-L-seryl-[protein] + ADP + H(+). The enzyme catalyses L-threonyl-[protein] + ATP = O-phospho-L-threonyl-[protein] + ADP + H(+). This chain is Putative cysteine-rich receptor-like protein kinase 39 (CRK39), found in Arabidopsis thaliana (Mouse-ear cress).